The following is a 214-amino-acid chain: Small ribosomal subunit protein eS6 (214 aa).

It belongs to the eukaryotic ribosomal protein eS6 family.

This is Small ribosomal subunit protein eS6 (rps6e) from Saccharolobus islandicus (strain Y.G.57.14 / Yellowstone #1) (Sulfolobus islandicus).